The primary structure comprises 130 residues: UPF0251 protein MmarC5_0986 (130 aa).

This sequence belongs to the UPF0251 family.

This Methanococcus maripaludis (strain C5 / ATCC BAA-1333) protein is UPF0251 protein MmarC5_0986.